Here is a 212-residue protein sequence, read N- to C-terminus: Uracil phosphoribosyltransferase (212 aa).

5-phospho-alpha-D-ribose 1-diphosphate contacts are provided by residues R78, R103, and 130 to 138; that span reads DPMLATGSS. Uracil-binding positions include I193 and 198–200; that span reads GDA. 5-phospho-alpha-D-ribose 1-diphosphate is bound at residue D199.

This sequence belongs to the UPRTase family. Mg(2+) serves as cofactor.

The enzyme catalyses UMP + diphosphate = 5-phospho-alpha-D-ribose 1-diphosphate + uracil. Its pathway is pyrimidine metabolism; UMP biosynthesis via salvage pathway; UMP from uracil: step 1/1. Allosterically activated by GTP. In terms of biological role, catalyzes the conversion of uracil and 5-phospho-alpha-D-ribose 1-diphosphate (PRPP) to UMP and diphosphate. The chain is Uracil phosphoribosyltransferase from Pseudomonas fluorescens (strain SBW25).